The sequence spans 549 residues: Coiled-coil domain-containing protein 102A (549 aa).

3 disordered regions span residues M1 to A61, L135 to E195, and P207 to A248. S12, S26, and S28 each carry phosphoserine. Residues S37 to L55 are compositionally biased toward pro residues. A coiled-coil region spans residues E69 to R160. Composition is skewed to basic and acidic residues over residues L135–R158 and A165–A187. Coiled coils occupy residues K263–A398 and K426–L517. Disordered regions lie at residues E472–N496 and R509–A549. The segment covering E530–A549 has biased composition (acidic residues). S536 bears the Phosphoserine mark.

This chain is Coiled-coil domain-containing protein 102A (Ccdc102a), found in Mus musculus (Mouse).